A 318-amino-acid chain; its full sequence is MADTEEENLQSQIDEVEALTSIYGDEWCVIDEAERIFCITVSDSSNKPTWTLCLQVILPAEYPASSPPLYQLNAPWLRGEDRLTLANNLEEIYLQNLGENILYQWVEKIREFLLGKSQTSDPGPCLKSTSEETDVDDDCEIPAEELNESFKNSMLFGLNDSSGVEEIPPIIHGETITDRRSTFQAHLAPVVSPYQVKLILNKLYENKKIATATHNIYAYRIYIKERNSFIQDCEDDGETAAGKRMLHLMQILDARDVMVVVSRWYGGILLGPDRFKHINNCARNILMEHKYCSAGEESSKQTAKSKKVGKECKKKADH.

In terms of domain architecture, RWD spans 14-116 (DEVEALTSIY…EKIREFLLGK (103 aa)). The tract at residues 296–318 (EESSKQTAKSKKVGKECKKKADH) is disordered. Over residues 308–318 (VGKECKKKADH) the composition is skewed to basic and acidic residues.

This sequence belongs to the IMPACT family. Interacts with GCN1; prevents the interaction of GCN1 with EIF2AK4/GCN2 and inhibits EIF2AK4/GCN2 kinase activity. Interaction with RPL39; this interaction occurs in a GCN1-independent manner. Associates with ribosomes; this interaction occurs in a GCN1-independent manner. Associates with actin; this interaction occurs in a GCN1-independent manner.

It localises to the cytoplasm. Translational regulator that ensures constant high levels of translation upon a variety of stress conditions, such as amino acid starvation, UV-C irradiation, proteasome inhibitor treatment and glucose deprivation. Plays a role as a negative regulator of the EIF2AK4/GCN2 kinase activity; impairs GCN1-mediated EIF2AK4/GCN2 activation, and hence EIF2AK4/GCN2-mediated eIF-2-alpha phosphorylation and subsequent down-regulation of protein synthesis. Plays a role in differentiation of neuronal cells by stimulating neurite outgrowth. This is Protein IMPACT-A (impact-A) from Xenopus tropicalis (Western clawed frog).